The primary structure comprises 178 residues: Probable coatomer subunit zeta-B (178 aa).

It belongs to the adaptor complexes small subunit family. In terms of assembly, oligomeric complex that consists of at least the alpha, beta, beta', gamma, delta, epsilon and zeta subunits.

It localises to the cytoplasm. Its subcellular location is the golgi apparatus membrane. It is found in the cytoplasmic vesicle. The protein localises to the COPI-coated vesicle membrane. Its function is as follows. The coatomer is a cytosolic protein complex that binds to dilysine motifs and reversibly associates with Golgi non-clathrin-coated vesicles, which further mediate biosynthetic protein transport from the ER, via the Golgi up to the trans Golgi network. Coatomer complex is required for budding from Golgi membranes, and is essential for the retrograde Golgi-to-ER transport of dilysine-tagged proteins. The zeta subunit may be involved in regulating the coat assembly and, hence, the rate of biosynthetic protein transport due to its association-dissociation properties with the coatomer complex. The chain is Probable coatomer subunit zeta-B (copZb) from Dictyostelium discoideum (Social amoeba).